The chain runs to 250 residues: MAVTKLVLVRHGESQWNKENRFTGWYDVDLSEKGVSEAKAAGKLLKEEGFSFDFAYTSVLKRAIHTLWNVLDELDQAWLPVEKSWKLNERHYGALQGLNKAETAEKYGDEQVKQWRRGFAVTPPELTKDDERYPGHDPRYAKLSEKELPLTESLALTIDRVIPYWNDTILPRMKSGERVIIAAHGNSLRALVKYLDNMSEDEILELNIPTGVPLVYEFDENFKPLKHYYLGNADEIAAKAAAVANQGKAK.

Residues 10-17, 23-24, Arg-62, 89-92, Lys-100, 116-117, and 185-186 each bind substrate; these read RHGESQWN, TG, ERHY, RR, and GN. His-11 acts as the Tele-phosphohistidine intermediate in catalysis. The active-site Proton donor/acceptor is Glu-89.

This sequence belongs to the phosphoglycerate mutase family. BPG-dependent PGAM subfamily. In terms of assembly, homodimer.

It carries out the reaction (2R)-2-phosphoglycerate = (2R)-3-phosphoglycerate. Its pathway is carbohydrate degradation; glycolysis; pyruvate from D-glyceraldehyde 3-phosphate: step 3/5. Its function is as follows. Catalyzes the interconversion of 2-phosphoglycerate and 3-phosphoglycerate. This Salmonella agona (strain SL483) protein is 2,3-bisphosphoglycerate-dependent phosphoglycerate mutase.